The chain runs to 480 residues: Glycogen synthase (480 aa).

Residue lysine 15 participates in ADP-alpha-D-glucose binding.

This sequence belongs to the glycosyltransferase 1 family. Bacterial/plant glycogen synthase subfamily.

It catalyses the reaction [(1-&gt;4)-alpha-D-glucosyl](n) + ADP-alpha-D-glucose = [(1-&gt;4)-alpha-D-glucosyl](n+1) + ADP + H(+). It participates in glycan biosynthesis; glycogen biosynthesis. In terms of biological role, synthesizes alpha-1,4-glucan chains using ADP-glucose. In Pasteurella multocida (strain Pm70), this protein is Glycogen synthase.